Here is a 166-residue protein sequence, read N- to C-terminus: Cytochrome c-type biogenesis protein CcmE (166 aa).

Over 1-7 (MTRKQKR) the chain is Cytoplasmic. A helical; Signal-anchor for type II membrane protein transmembrane segment spans residues 8–28 (LALIASGAVVVSLAVGLVMFA). The Periplasmic portion of the chain corresponds to 29 to 166 (LRDNIVFFYS…QTAPQGAQAY (138 aa)). Heme contacts are provided by H122 and Y126. The disordered stretch occupies residues 139–166 (GVWQEEGKSEGKPSAIPAQTAPQGAQAY).

The protein belongs to the CcmE/CycJ family.

The protein localises to the cell inner membrane. Functionally, heme chaperone required for the biogenesis of c-type cytochromes. Transiently binds heme delivered by CcmC and transfers the heme to apo-cytochromes in a process facilitated by CcmF and CcmH. This Methylocella silvestris (strain DSM 15510 / CIP 108128 / LMG 27833 / NCIMB 13906 / BL2) protein is Cytochrome c-type biogenesis protein CcmE.